Reading from the N-terminus, the 313-residue chain is Arabinooligosaccharides transport system permease protein AraP (313 aa).

The next 6 membrane-spanning stretches (helical) occupy residues 39 to 59 (FVLS…IMSF), 91 to 111 (LEYT…LAIF), 126 to 146 (ALFI…RLIF), 176 to 196 (MFLM…LYFL), 224 to 244 (ITLP…IIGG), and 281 to 301 (MGYG…VSLI). Residues 87 to 302 (LWNTLEYTFW…IVILVVSLIS (216 aa)) enclose the ABC transmembrane type-1 domain.

Belongs to the binding-protein-dependent transport system permease family. MalFG subfamily. The complex is composed of two ATP-binding proteins (MsmX), two transmembrane proteins (AraP and AraQ) and a solute-binding protein (AraN).

It localises to the cell membrane. Functionally, part of the ABC transporter complex AraNPQ involved in the uptake of arabinooligosaccharides. Transports alpha-1,5-arabinooligosaccharides, at least up to four L-arabinosyl units. Responsible for the translocation of the substrate across the membrane. In Bacillus subtilis (strain 168), this protein is Arabinooligosaccharides transport system permease protein AraP.